The following is a 180-amino-acid chain: Beta-lactoglobulin-1/B (180 aa).

The N-terminal stretch at methionine 1–alanine 18 is a signal peptide. 3 disulfides stabilise this stretch: cysteine 84–cysteine 178, cysteine 124–cysteine 137, and cysteine 124–cysteine 139.

The protein belongs to the calycin superfamily. Lipocalin family. As to quaternary structure, under physiological conditions beta-lactoglobulin exists as an equilibrium mixture of monomeric and dimeric forms. Post-translationally, alternate disulfide bonds occur in equal amounts.

The protein localises to the secreted. Its function is as follows. Lactoglobulin is the primary component of whey, it binds retinol and is probably involved in the transport of that molecule. The protein is Beta-lactoglobulin-1/B of Ovis aries (Sheep).